The sequence spans 72 residues: Delta-actitoxin-Avd2b 1 (72 aa).

An N-terminal signal peptide occupies residues 1 to 21; it reads MMNRLLVFLMLGAAFMLVVSA. Positions 22–42 are excised as a propeptide; the sequence is NDAYGDEPAFKDLNQGDESLG. Cystine bridges form between cysteine 47-cysteine 62, cysteine 48-cysteine 56, and cysteine 50-cysteine 67.

This sequence belongs to the sea anemone short toxin (type III) family.

Its subcellular location is the secreted. The protein localises to the nematocyst. Functionally, voltage-gated sodium channel (Nav) inhibitor. 1 uM completely inhibits insect voltage-gated sodium channel inactivation (DmNav1 from D.melanogaster). The sequence is that of Delta-actitoxin-Avd2b 1 from Anemonia viridis (Snakelocks anemone).